We begin with the raw amino-acid sequence, 175 residues long: Sec-independent protein translocase protein TatB (175 aa).

A helical membrane pass occupies residues 1 to 21 (MLDLGLSKMALIGVVALVVLG). The segment covering 96–115 (VSPGGSAAADAPDGPSAASG) has biased composition (low complexity). 2 disordered regions span residues 96–119 (VSPGGSAAADAPDGPSAASGEPSW) and 152–175 (QVQSGAARVARHRPASLRRPARFL). Residues 160–175 (VARHRPASLRRPARFL) are compositionally biased toward basic residues.

It belongs to the TatB family. In terms of assembly, the Tat system comprises two distinct complexes: a TatABC complex, containing multiple copies of TatA, TatB and TatC subunits, and a separate TatA complex, containing only TatA subunits. Substrates initially bind to the TatABC complex, which probably triggers association of the separate TatA complex to form the active translocon.

Its subcellular location is the cell inner membrane. Its function is as follows. Part of the twin-arginine translocation (Tat) system that transports large folded proteins containing a characteristic twin-arginine motif in their signal peptide across membranes. Together with TatC, TatB is part of a receptor directly interacting with Tat signal peptides. TatB may form an oligomeric binding site that transiently accommodates folded Tat precursor proteins before their translocation. In Burkholderia pseudomallei (strain 1710b), this protein is Sec-independent protein translocase protein TatB.